Reading from the N-terminus, the 430-residue chain is Adenylosuccinate synthetase (430 aa).

Residues 12 to 18 (GDEGKGK) and 40 to 42 (GHT) contribute to the GTP site. Asp13 functions as the Proton acceptor in the catalytic mechanism. Residues Asp13 and Gly40 each contribute to the Mg(2+) site. Residues 13 to 16 (DEGK), 38 to 41 (NAGH), Thr130, Arg144, Gln225, Thr240, and Arg304 contribute to the IMP site. His41 (proton donor) is an active-site residue. 300 to 306 (ATTGRPR) contacts substrate. GTP contacts are provided by residues Arg306, 332-334 (KLD), and 414-416 (SIG).

It belongs to the adenylosuccinate synthetase family. In terms of assembly, homodimer. Requires Mg(2+) as cofactor.

It is found in the cytoplasm. The catalysed reaction is IMP + L-aspartate + GTP = N(6)-(1,2-dicarboxyethyl)-AMP + GDP + phosphate + 2 H(+). It participates in purine metabolism; AMP biosynthesis via de novo pathway; AMP from IMP: step 1/2. Its function is as follows. Plays an important role in the de novo pathway of purine nucleotide biosynthesis. Catalyzes the first committed step in the biosynthesis of AMP from IMP. This chain is Adenylosuccinate synthetase, found in Geobacter metallireducens (strain ATCC 53774 / DSM 7210 / GS-15).